We begin with the raw amino-acid sequence, 364 residues long: 4-hydroxy-3-methylbut-2-en-1-yl diphosphate synthase (flavodoxin) (364 aa).

The [4Fe-4S] cluster site is built by C268, C271, C303, and E310.

This sequence belongs to the IspG family. The cofactor is [4Fe-4S] cluster.

The enzyme catalyses (2E)-4-hydroxy-3-methylbut-2-enyl diphosphate + oxidized [flavodoxin] + H2O + 2 H(+) = 2-C-methyl-D-erythritol 2,4-cyclic diphosphate + reduced [flavodoxin]. The protein operates within isoprenoid biosynthesis; isopentenyl diphosphate biosynthesis via DXP pathway; isopentenyl diphosphate from 1-deoxy-D-xylulose 5-phosphate: step 5/6. Functionally, converts 2C-methyl-D-erythritol 2,4-cyclodiphosphate (ME-2,4cPP) into 1-hydroxy-2-methyl-2-(E)-butenyl 4-diphosphate. The sequence is that of 4-hydroxy-3-methylbut-2-en-1-yl diphosphate synthase (flavodoxin) from Anoxybacillus flavithermus (strain DSM 21510 / WK1).